Here is a 338-residue protein sequence, read N- to C-terminus: 2-oxoglutarate-dependent dioxygenase ecdG (338 aa).

The region spanning 165 to 273 is the Fe2OG dioxygenase domain; sequence PSVTNLGFLR…KYTLAYFVRP (109 aa). Fe cation-binding residues include His190, Asp192, and His249. Lys264 contributes to the 2-oxoglutarate binding site.

This sequence belongs to the iron/ascorbate-dependent oxidoreductase family. It depends on Fe(2+) as a cofactor.

It functions in the pathway antifungal biosynthesis. Its function is as follows. 2-oxoglutarate-dependent dioxygenase; part of the gene cluster that mediates the biosynthesis of echinocandin B, a fungal lipidated cyclic hexapeptide that acts as an antifungal agent. Linoleoyl-AMP, produced by the fatty-acyl-AMP ligase ecdI, is transferred to the initiation carrier domain (T0) of ecdA. The linoleoyl-S-phosphopantetheinyl-T0 is sequentially extended with L-ornithine, L-threonine, L-proline, L-homotyrosine, L-threonine, and 4R-methyl-L-proline to form the linear hexapeptide. Thereafter, the terminal condensation (C7) performs macrocyclization of the NRPS product and the cyclic scaffold is released from ecdA. All six of the amino acid residues are hydroxylated, including 4R,5R-dihydroxy-L-ornithine, 4R-hydroxyl-L-proline, 3S,4S-dihydroxy-L-homotyrosine, and 3S-hydroxyl-4S-methyl-L-prolin. In the pathway, all the hydroxylation reactions are proposed to occur following completion of the cyclic peptide, so the unhydroxylated precursor produced by ecdA will undergo six rounds of hydroxylation. Five hydroxylase genes (ecdG, ecdH, ecdK, htyE and htyF) are embedded within the echinocandin B (ecd) and L-homotyrosine (hty) clusters. In Aspergillus rugulosus (Emericella rugulosa), this protein is 2-oxoglutarate-dependent dioxygenase ecdG.